The primary structure comprises 189 residues: MNKLTILFLILALISVIYAQHKFPSSSEDSSSNDSNSQVTGSQSYSGSQSDSNSGSESHTINTGSSYSGSGSGSSGISGGSGSGSGSGSGSGSGSGSGSGAVSGSQSGSGAVSGSQSGSGAVSGSQSGVQTGSQSGAGSASGAFTGNPSGSQSQEINTGSSYSGSGSGAPTGAATGSGSGSGSSGTVYY.

An N-terminal signal peptide occupies residues 1-19 (MNKLTILFLILALISVIYA). The interval 24 to 189 (PSSSEDSSSN…GSGSSGTVYY (166 aa)) is disordered. Positions 25–69 (SSSEDSSSNDSNSQVTGSQSYSGSQSDSNSGSESHTINTGSSYSG) are enriched in low complexity. The span at 70–101 (SGSGSSGISGGSGSGSGSGSGSGSGSGSGSGA) shows a compositional bias: gly residues. The span at 102-142 (VSGSQSGSGAVSGSQSGSGAVSGSQSGVQTGSQSGAGSASG) shows a compositional bias: low complexity. Polar residues predominate over residues 144 to 157 (FTGNPSGSQSQEIN). The span at 165 to 183 (SGSGAPTGAATGSGSGSGS) shows a compositional bias: gly residues.

This is an uncharacterized protein from Dictyostelium discoideum (Social amoeba).